A 191-amino-acid chain; its full sequence is Peptidyl-tRNA hydrolase (191 aa).

Tyrosine 14 lines the tRNA pocket. Catalysis depends on histidine 19, which acts as the Proton acceptor. 3 residues coordinate tRNA: tyrosine 64, asparagine 66, and asparagine 112.

It belongs to the PTH family. Monomer.

It localises to the cytoplasm. It carries out the reaction an N-acyl-L-alpha-aminoacyl-tRNA + H2O = an N-acyl-L-amino acid + a tRNA + H(+). Functionally, hydrolyzes ribosome-free peptidyl-tRNAs (with 1 or more amino acids incorporated), which drop off the ribosome during protein synthesis, or as a result of ribosome stalling. Its function is as follows. Catalyzes the release of premature peptidyl moieties from peptidyl-tRNA molecules trapped in stalled 50S ribosomal subunits, and thus maintains levels of free tRNAs and 50S ribosomes. The polypeptide is Peptidyl-tRNA hydrolase (Clostridium botulinum (strain Eklund 17B / Type B)).